The primary structure comprises 367 residues: Leu/Ile/Val-binding protein BraC3 (367 aa).

The signal sequence occupies residues 1-22 (MTLKTLTATLVASLAFAPLAHA).

The protein belongs to the leucine-binding protein family. As to quaternary structure, the complex is composed of two ATP-binding proteins (BraF and BraG), two transmembrane proteins (BraD and BraE) and a solute-binding protein (BraC or BraC3).

It localises to the periplasm. Part of the ABC transporter complex BraDEFGC/C3 involved in transport of branched-chain amino acids Leu, Ile and Val (LIV). Essential for the development of bacteroids, the differentiated legume-symbiotic forms of this bacterium, and for the effective N(2) fixation by them. In Rhizobium johnstonii (strain DSM 114642 / LMG 32736 / 3841) (Rhizobium leguminosarum bv. viciae), this protein is Leu/Ile/Val-binding protein BraC3.